Reading from the N-terminus, the 352-residue chain is Rhodopsin (352 aa).

The Extracellular portion of the chain corresponds to 1–36 (MNGTEGPYFYVPMSNATGVVRSPYEYPQYYLAPPWA). 2 N-linked (GlcNAc...) asparagine glycosylation sites follow: Asn2 and Asn15. Residues 37–61 (YACLAAYMFFLILVGFPVNFLTLYV) form a helical membrane-spanning segment. Over 62-73 (TIEHKKLRTPLN) the chain is Cytoplasmic. The helical transmembrane segment at 74–96 (YILLNLAVADLFMVFGGFTTTMY) threads the bilayer. Over 97 to 110 (TSLNGYFVFGRLGC) the chain is Extracellular. A disulfide bond links Cys110 and Cys187. The helical transmembrane segment at 111–133 (NLEGFFATFGGINSLWCLVVLSI) threads the bilayer. Positions 134 to 136 (ERW) match the 'Ionic lock' involved in activated form stabilization motif. At 134 to 152 (ERWVVVCKPMSNFRFGENH) the chain is on the cytoplasmic side. Residues 153–173 (AIMGVAFTWFMALACTVPPLV) traverse the membrane as a helical segment. Residues 174–202 (GWSRYIPEGMQCSCGIDYYTRAEGFNNES) are Extracellular-facing. A helical transmembrane segment spans residues 203 to 224 (FVIYMFVVHFLTPLFVITFCYG). The Cytoplasmic portion of the chain corresponds to 225 to 252 (RLVCTVKEAAAQQQESETTQRAEREVTR). A helical membrane pass occupies residues 253–274 (MVILMFIAYLVCWLPYASVSWW). The Extracellular segment spans residues 275-286 (IFTNQGSEFGPI). The helical transmembrane segment at 287-308 (FMTVPAFFAKSSSIYNPVIYIC) threads the bilayer. Lys296 carries the N6-(retinylidene)lysine modification. At 309 to 352 (LNKQFRHCMITTLCCGKNPFEEEEGASTTASKTEASSVSSVSPA) the chain is on the cytoplasmic side. Residues Cys322 and Cys323 are each lipidated (S-palmitoyl cysteine). Residues 331-352 (EEGASTTASKTEASSVSSVSPA) form a disordered region. The span at 334 to 352 (ASTTASKTEASSVSSVSPA) shows a compositional bias: low complexity.

This sequence belongs to the G-protein coupled receptor 1 family. Opsin subfamily. In terms of processing, phosphorylated on some or all of the serine and threonine residues present in the C-terminal region. Contains one covalently linked retinal chromophore.

Its subcellular location is the membrane. The protein localises to the cell projection. The protein resides in the cilium. It is found in the photoreceptor outer segment. Its function is as follows. Photoreceptor required for image-forming vision at low light intensity. While most salt water fish species use retinal as chromophore, most freshwater fish use 3-dehydroretinal, or a mixture of retinal and 3-dehydroretinal. Light-induced isomerization of 11-cis to all-trans retinal triggers a conformational change that activates signaling via G-proteins. Subsequent receptor phosphorylation mediates displacement of the bound G-protein alpha subunit by arrestin and terminates signaling. This is Rhodopsin (rho) from Psalidodon fasciatus (Banded astyanax).